Here is a 333-residue protein sequence, read N- to C-terminus: 6-phosphogluconolactonase (333 aa).

Belongs to the cycloisomerase 2 family.

The catalysed reaction is 6-phospho-D-glucono-1,5-lactone + H2O = 6-phospho-D-gluconate + H(+). The protein operates within carbohydrate degradation; pentose phosphate pathway; D-ribulose 5-phosphate from D-glucose 6-phosphate (oxidative stage): step 2/3. In terms of biological role, catalyzes the hydrolysis of 6-phosphogluconolactone to 6-phosphogluconate. The chain is 6-phosphogluconolactonase from Cronobacter sakazakii (strain ATCC BAA-894) (Enterobacter sakazakii).